The following is a 501-amino-acid chain: ATP synthase subunit alpha (501 aa).

An ATP-binding site is contributed by 169 to 176 (GDRQTGKT).

This sequence belongs to the ATPase alpha/beta chains family. F-type ATPases have 2 components, CF(1) - the catalytic core - and CF(0) - the membrane proton channel. CF(1) has five subunits: alpha(3), beta(3), gamma(1), delta(1), epsilon(1). CF(0) has three main subunits: a(1), b(2) and c(9-12). The alpha and beta chains form an alternating ring which encloses part of the gamma chain. CF(1) is attached to CF(0) by a central stalk formed by the gamma and epsilon chains, while a peripheral stalk is formed by the delta and b chains.

Its subcellular location is the cell membrane. The enzyme catalyses ATP + H2O + 4 H(+)(in) = ADP + phosphate + 5 H(+)(out). In terms of biological role, produces ATP from ADP in the presence of a proton gradient across the membrane. The alpha chain is a regulatory subunit. This is ATP synthase subunit alpha from Streptococcus mutans serotype c (strain ATCC 700610 / UA159).